Reading from the N-terminus, the 116-residue chain is Large ribosomal subunit protein bL19 (116 aa).

The protein belongs to the bacterial ribosomal protein bL19 family.

This protein is located at the 30S-50S ribosomal subunit interface and may play a role in the structure and function of the aminoacyl-tRNA binding site. This chain is Large ribosomal subunit protein bL19, found in Streptomyces griseus subsp. griseus (strain JCM 4626 / CBS 651.72 / NBRC 13350 / KCC S-0626 / ISP 5235).